We begin with the raw amino-acid sequence, 307 residues long: Dioxygenase swnH1 (307 aa).

Fe cation contacts are provided by His-149, Asp-151, and His-227.

It belongs to the PhyH family. As to quaternary structure, homodimer. It depends on Fe cation as a cofactor.

It functions in the pathway mycotoxin biosynthesis. Functionally, dioxygenase; part of the gene cluster that mediates the biosynthesis of swainsonine (SW), a cytotoxic fungal alkaloid and a potential cancer therapy drug. Swainsonine production occurs via a multibranched pathway and is dispensable for fungal colonization of plants and infection of insect hosts. The first step of swainsonine biosynthesis is the production of the precursor pipecolic acid (PA) via conversion of L-lysine (Lys) to 1-piperideine-6-carboxylate (P6C) by the aminotransferase swnA, the latter being further reduced to PA by the reductase swnR. PA can be converted from lysine by both the SW biosynthetic cluster and the unclustered genes such as lysine cyclodeaminase. The PKS-NRPS hybrid synthetase swnK uptakes and condensates PA and malonyl-CoA with and without skipping of the ketoreductase (KR) domain in order to produce 3 intermediates, 1-oxoindolizidine, (1S)-1-hydroxyindolizin, and (1R)-1-hydroxyindolizine; with the transisomer (1S)-1-hydroxyindolizin being predominant. The terminal thioester reductase (TE) domain of swnK is involved in reduction of the thioester bond to release the intermediate aldehydes. The oxidoreductase swnN could contribute to the reduction of 1-oxoindolizidine to (1S)-1-hydroxyindolizin and (1R)-1-hydroxyindolizine, contributing to the major route of SW production. The dioxygenase swnH2 would be responsible for the oxidization of (1R)-1-hydroxyindolizine into (1R,2S)-1,2-dihydroxyindolizine and of (1S)-1-hydroxyindolizin to yield both (1R,2S)-1,2-dihydroxyindolizine and (1S,2S)-1,2-dihydroxyindolizine. The dioxygenase swnH1 then performs the conversion of the 1,2-dihydroxyindolizine epimers to SW. In Metarhizium robertsii (strain ARSEF 23 / ATCC MYA-3075) (Metarhizium anisopliae (strain ARSEF 23)), this protein is Dioxygenase swnH1.